The following is a 188-amino-acid chain: Elongation factor P (188 aa).

Lys-34 carries the post-translational modification N6-(3,6-diaminohexanoyl)-5-hydroxylysine.

The protein belongs to the elongation factor P family. May be beta-lysylated on the epsilon-amino group of Lys-34 by the combined action of EpmA and EpmB, and then hydroxylated on the C5 position of the same residue by EpmC (if this protein is present). Lysylation is critical for the stimulatory effect of EF-P on peptide-bond formation. The lysylation moiety may extend toward the peptidyltransferase center and stabilize the terminal 3-CCA end of the tRNA. Hydroxylation of the C5 position on Lys-34 may allow additional potential stabilizing hydrogen-bond interactions with the P-tRNA.

It is found in the cytoplasm. It participates in protein biosynthesis; polypeptide chain elongation. In terms of biological role, involved in peptide bond synthesis. Alleviates ribosome stalling that occurs when 3 or more consecutive Pro residues or the sequence PPG is present in a protein, possibly by augmenting the peptidyl transferase activity of the ribosome. Modification of Lys-34 is required for alleviation. This chain is Elongation factor P, found in Actinobacillus succinogenes (strain ATCC 55618 / DSM 22257 / CCUG 43843 / 130Z).